The following is a 431-amino-acid chain: UDP-N-acetylglucosamine--N-acetylmuramyl-(pentapeptide) pyrophosphoryl-undecaprenol N-acetylglucosamine transferase (431 aa).

Residues 29 to 31, Asn-141, Arg-177, Ser-205, Ile-258, and Gln-303 contribute to the UDP-N-acetyl-alpha-D-glucosamine site; that span reads TGG. Residues 370–431 are disordered; the sequence is AGSGDGQPPA…NPGASAGGAP (62 aa). The span at 395–420 shows a compositional bias: polar residues; it reads KQGSMQTSVNGDRSAQLIATNPQSRL.

The protein belongs to the glycosyltransferase 28 family. MurG subfamily.

It localises to the cell inner membrane. The enzyme catalyses di-trans,octa-cis-undecaprenyl diphospho-N-acetyl-alpha-D-muramoyl-L-alanyl-D-glutamyl-meso-2,6-diaminopimeloyl-D-alanyl-D-alanine + UDP-N-acetyl-alpha-D-glucosamine = di-trans,octa-cis-undecaprenyl diphospho-[N-acetyl-alpha-D-glucosaminyl-(1-&gt;4)]-N-acetyl-alpha-D-muramoyl-L-alanyl-D-glutamyl-meso-2,6-diaminopimeloyl-D-alanyl-D-alanine + UDP + H(+). It functions in the pathway cell wall biogenesis; peptidoglycan biosynthesis. In terms of biological role, cell wall formation. Catalyzes the transfer of a GlcNAc subunit on undecaprenyl-pyrophosphoryl-MurNAc-pentapeptide (lipid intermediate I) to form undecaprenyl-pyrophosphoryl-MurNAc-(pentapeptide)GlcNAc (lipid intermediate II). In Xanthomonas euvesicatoria pv. vesicatoria (strain 85-10) (Xanthomonas campestris pv. vesicatoria), this protein is UDP-N-acetylglucosamine--N-acetylmuramyl-(pentapeptide) pyrophosphoryl-undecaprenol N-acetylglucosamine transferase.